The sequence spans 76 residues: Omega-conotoxin-like TxO1 (76 aa).

The N-terminal stretch at 1-22 (MKLTCVVIVAVLFLTVWTFATA) is a signal peptide. Residues 23 to 50 (DDSGNGLEKLFSNAHHEMKNPEASKLNE) constitute a propeptide that is removed on maturation. Disulfide bonds link C52–C67, C59–C70, and C66–C75.

The protein belongs to the conotoxin O1 superfamily. As to expression, expressed by the venom duct.

Its subcellular location is the secreted. Its function is as follows. Omega-conotoxins act at presynaptic membranes, they bind and block voltage-gated calcium channels (Cav). The sequence is that of Omega-conotoxin-like TxO1 from Conus textile (Cloth-of-gold cone).